A 1088-amino-acid chain; its full sequence is V-type proton ATPase catalytic subunit A (1088 aa).

An ATP-binding site is contributed by 257–264 (GAFGCGKT). Positions 485 to 662 (LLGTWAGIGN…LVKIAHSLGI (178 aa)) constitute a DOD-type homing endonuclease domain.

It belongs to the ATPase alpha/beta chains family. In terms of assembly, V-ATPase is a heteromultimeric enzyme composed of a peripheral catalytic V1 complex (components A to H) attached to an integral membrane V0 proton pore complex (components: a, c, c', c'', d, e, f and VOA1). In terms of processing, this protein undergoes a protein self splicing that involves a post-translational excision of the VDE intervening region (intein) followed by peptide ligation.

Its subcellular location is the vacuole membrane. The catalysed reaction is ATP + H2O + 4 H(+)(in) = ADP + phosphate + 5 H(+)(out). In terms of biological role, catalytic subunit of the V1 complex of vacuolar(H+)-ATPase (V-ATPase), a multisubunit enzyme composed of a peripheral complex (V1) that hydrolyzes ATP and a membrane integral complex (V0) that translocates protons. V-ATPase is responsible for acidifying and maintaining the pH of intracellular compartments. Its function is as follows. VDE is an endonuclease that can cleave at a site present in a VMA1 allele that lacks the derived endonuclease segment of the open reading frame; cleavage at this site only occurs during meiosis and initiates 'homing', a genetic event that converts a VMA1 allele lacking VDE into one that contains it. The protein is V-type proton ATPase catalytic subunit A (VMA1) of Candida tropicalis (Yeast).